Consider the following 779-residue polypeptide: Acyl-homoserine lactone acylase PvdQ (779 aa).

The first 25 residues, 1–25 (MIISRPLCGFVFAGLSFAVILPAQA), serve as a signal peptide directing secretion. The propeptide at 202-223 (SQQVQALQLAAVRNQRFALERG) is spacer peptide. Ser224 acts as the Nucleophile in catalysis. Positions 731–746 (ESSNPQSAHSSDQTEA) are enriched in polar residues. The disordered stretch occupies residues 731–752 (ESSNPQSAHSSDQTEAFSKKQW).

This sequence belongs to the peptidase S45 family. In terms of assembly, heterodimer of an alpha subunit and a beta subunit processed from the same precursor.

It is found in the periplasm. The enzyme catalyses an N-acyl-L-homoserine lactone + H2O = L-homoserine lactone + a carboxylate. Catalyzes the deacylation of acyl-homoserine lactone (AHL or acyl-HSL), releasing homoserine lactone (HSL) and the corresponding fatty acid. Possesses a specificity for the degradation of long-chain acyl-HSLs (side chains of 11 to 14 carbons in length). The chain is Acyl-homoserine lactone acylase PvdQ (pvdQ) from Pseudomonas savastanoi pv. phaseolicola (strain 1448A / Race 6) (Pseudomonas syringae pv. phaseolicola (strain 1448A / Race 6)).